Reading from the N-terminus, the 63-residue chain is MEKSQSSCDTRKRSVVVDVDNTKDRISDLPNRILGKIIVKLPLDEAVRIMALSKRWKSIWDDN.

Residues 23-63 form the F-box domain; the sequence is KDRISDLPNRILGKIIVKLPLDEAVRIMALSKRWKSIWDDN.

The polypeptide is Putative F-box protein At1g47702 (Arabidopsis thaliana (Mouse-ear cress)).